The sequence spans 393 residues: Probable galacturonosyltransferase-like 8 (393 aa).

At 1–4 (MSSR) the chain is on the cytoplasmic side. The helical; Signal-anchor for type II membrane protein transmembrane segment at 5–25 (FSLTVVCLIALLPFVVGIRLI) threads the bilayer. The Lumenal segment spans residues 26 to 393 (PARITSVGDG…SELTDDSSFL (368 aa)). An N-linked (GlcNAc...) asparagine glycan is attached at Asn226.

The protein belongs to the glycosyltransferase 8 family.

It localises to the golgi apparatus membrane. It participates in glycan metabolism; pectin biosynthesis. Functionally, may be involved in pectin and/or xylans biosynthesis in cell walls. The sequence is that of Probable galacturonosyltransferase-like 8 (GATL8) from Arabidopsis thaliana (Mouse-ear cress).